The sequence spans 142 residues: Small ribosomal subunit protein bS6 (142 aa).

The span at 110-133 (NKKPSHAKEKHEKTEHTHSHHAEE) shows a compositional bias: basic and acidic residues. Residues 110–142 (NKKPSHAKEKHEKTEHTHSHHAEEAESVGSHSE) form a disordered region.

The protein belongs to the bacterial ribosomal protein bS6 family.

Binds together with bS18 to 16S ribosomal RNA. The polypeptide is Small ribosomal subunit protein bS6 (Helicobacter pylori (strain P12)).